Consider the following 276-residue polypeptide: MLMITSFANPRVAQAFVDYMATQGIILTIQQHTQSDVWLADESQAGRVRAELARFLENPADPRYLAASWQSGQTNSGLRYQRFPFFATLRHNAGPFTWAILLICIAVFILQNLLGDQPVMIWLAWPYDPSLQFEAWRYFSHAFMHFSLMHILFNLLWWWYLGGAVEKRIGSGKLVVITVISALLSGFVQHQFSGPWFGGLSGVVYALMGYVWLRGERDPQSGIYLQRGLILFSLVWLIAGWFDVFGMAIANGAHVAGLATGLAMAFVDTLHGRKRA.

The next 6 membrane-spanning stretches (helical) occupy residues 94–114 (GPFTWAILLICIAVFILQNLL), 142–162 (AFMHFSLMHILFNLLWWWYLG), 169–189 (IGSGKLVVITVISALLSGFVQ), 192–212 (FSGPWFGGLSGVVYALMGYVW), 229–249 (LILFSLVWLIAGWFDVFGMAI), and 252–272 (GAHVAGLATGLAMAFVDTLHG). Catalysis depends on S201, which acts as the Nucleophile. The active site involves H254.

The protein belongs to the peptidase S54 family.

Its subcellular location is the cell inner membrane. The catalysed reaction is Cleaves type-1 transmembrane domains using a catalytic dyad composed of serine and histidine that are contributed by different transmembrane domains.. Rhomboid-type serine protease that catalyzes intramembrane proteolysis. The chain is Rhomboid protease GlpG from Klebsiella pneumoniae subsp. pneumoniae (strain ATCC 700721 / MGH 78578).